The sequence spans 155 residues: Keratin-associated protein 4-7 (155 aa).

20 repeat units span residues 5 to 9, 24 to 28, 29 to 33, 34 to 38, 44 to 48, 49 to 53, 54 to 58, 59 to 63, 64 to 68, 69 to 73, 74 to 78, 79 to 83, 84 to 88, 89 to 93, 94 to 98, 99 to 103, 104 to 108, 109 to 113, 114 to 118, and 119 to 123. The segment at 5–123 is 20 X 5 AA repeats of C-C-[GIKRQVHEML]-[SPTRV]-[STVQRCP]; it reads CCGSVCSDQG…CCRPCCCLRP (119 aa).

The protein belongs to the KRTAP type 4 family. As to quaternary structure, interacts with hair keratins. As to expression, expressed in the hair follicles.

Its function is as follows. In the hair cortex, hair keratin intermediate filaments are embedded in an interfilamentous matrix, consisting of hair keratin-associated proteins (KRTAP), which are essential for the formation of a rigid and resistant hair shaft through their extensive disulfide bond cross-linking with abundant cysteine residues of hair keratins. The matrix proteins include the high-sulfur and high-glycine-tyrosine keratins. This Homo sapiens (Human) protein is Keratin-associated protein 4-7 (KRTAP4-7).